The primary structure comprises 206 residues: Large ribosomal subunit protein uL3 (206 aa).

Residues 116-149 (GFQGAIKRHNQSRGPMSHGSRYHRRPGSMGPVAP) are disordered.

It belongs to the universal ribosomal protein uL3 family. Part of the 50S ribosomal subunit. Forms a cluster with proteins L14 and L19.

Functionally, one of the primary rRNA binding proteins, it binds directly near the 3'-end of the 23S rRNA, where it nucleates assembly of the 50S subunit. The polypeptide is Large ribosomal subunit protein uL3 (Shouchella clausii (strain KSM-K16) (Alkalihalobacillus clausii)).